The sequence spans 768 residues: Cullin-3-B (768 aa).

Residues 677-698 are disordered; the sequence is VAAKQGESDPERKETRQKVDDD. Residues 682 to 698 are compositionally biased toward basic and acidic residues; sequence GESDPERKETRQKVDDD. The region spanning 698–760 is the Cullin neddylation domain; it reads DRKHEIEAAI…REYLARTPED (63 aa). Residue lysine 712 forms a Glycyl lysine isopeptide (Lys-Gly) (interchain with G-Cter in NEDD8) linkage.

The protein belongs to the cullin family. Component of multiple BCR (BTB-CUL3-RBX1) E3 ubiquitin-protein ligase complexes formed of cul3, rbx1 and a variable BTB domain-containing protein acting as both, adapter to cullin and substrate recognition subunit. Interacts with btbd6. In terms of processing, neddylated. Attachment of NEDD8 is required for the E3 ubiquitin-protein ligase activity of the SCF-like complex.

The protein resides in the nucleus. It functions in the pathway protein modification; protein ubiquitination. Functionally, probable core component of cullin-based SCF-like E3 ubiquitin-protein ligase complexes which mediate the ubiquitination and subsequent proteasomal degradation of target proteins. The E3 ubiquitin-protein ligase activity of the complex is dependent on the neddylation of the cullin subunit. Involved in ER-Golgi transport by regulating the size of COPII coats, thereby playing a key role in collagen export, which is required for embryonic stem (ES) cells division. May play a role in the regulation of mittotic entry via ubiquitination of aurka. In Xenopus laevis (African clawed frog), this protein is Cullin-3-B (cul3b).